The following is a 172-amino-acid chain: RTX-I toxin-activating lysine-acyltransferase ApxIC (172 aa).

Active-site residues include H24 and D93.

The protein belongs to the RTX toxin acyltransferase family. In terms of assembly, homodimer.

It is found in the cytoplasm. It carries out the reaction a fatty acyl-[ACP] + L-lysyl-[protein] = N(6)-(fatty acyl)-L-lysyl-[protein] + holo-[ACP] + H(+). Its function is as follows. Protein-lysine acyltransferase that catalyzes fatty acylation of the protoxin, thereby converting it to the active toxin. This Actinobacillus pleuropneumoniae (Haemophilus pleuropneumoniae) protein is RTX-I toxin-activating lysine-acyltransferase ApxIC.